The sequence spans 339 residues: Tetracenomycin polyketide synthesis 8-O-methyl transferase TcmO (339 aa).

S-adenosyl-L-methionine contacts are provided by residues aspartate 200 and 226–228 (GDF). Histidine 246 serves as the catalytic Proton acceptor.

This sequence belongs to the class I-like SAM-binding methyltransferase superfamily. Cation-independent O-methyltransferase family.

It functions in the pathway antibiotic biosynthesis; tetracenomycin C biosynthesis. This is Tetracenomycin polyketide synthesis 8-O-methyl transferase TcmO (tcmO) from Streptomyces glaucescens.